The following is a 358-amino-acid chain: Phosphoribosyl pyrophosphate synthase-associated protein 2 (358 aa).

It belongs to the ribose-phosphate pyrophosphokinase family.

Functionally, seems to play a negative regulatory role in 5-phosphoribose 1-diphosphate synthesis. The chain is Phosphoribosyl pyrophosphate synthase-associated protein 2 (prpsap2) from Xenopus tropicalis (Western clawed frog).